The chain runs to 249 residues: Ubiquinone/menaquinone biosynthesis C-methyltransferase UbiE (249 aa).

Residues Thr-74, Asp-93, and 121–122 each bind S-adenosyl-L-methionine; that span reads DA.

The protein belongs to the class I-like SAM-binding methyltransferase superfamily. MenG/UbiE family.

The enzyme catalyses a 2-demethylmenaquinol + S-adenosyl-L-methionine = a menaquinol + S-adenosyl-L-homocysteine + H(+). The catalysed reaction is a 2-methoxy-6-(all-trans-polyprenyl)benzene-1,4-diol + S-adenosyl-L-methionine = a 5-methoxy-2-methyl-3-(all-trans-polyprenyl)benzene-1,4-diol + S-adenosyl-L-homocysteine + H(+). It functions in the pathway quinol/quinone metabolism; menaquinone biosynthesis; menaquinol from 1,4-dihydroxy-2-naphthoate: step 2/2. Its pathway is cofactor biosynthesis; ubiquinone biosynthesis. Functionally, methyltransferase required for the conversion of demethylmenaquinol (DMKH2) to menaquinol (MKH2) and the conversion of 2-polyprenyl-6-methoxy-1,4-benzoquinol (DDMQH2) to 2-polyprenyl-3-methyl-6-methoxy-1,4-benzoquinol (DMQH2). This chain is Ubiquinone/menaquinone biosynthesis C-methyltransferase UbiE, found in Acidiphilium cryptum (strain JF-5).